We begin with the raw amino-acid sequence, 131 residues long: Large ribosomal subunit protein bL12 (131 aa).

This sequence belongs to the bacterial ribosomal protein bL12 family. In terms of assembly, homodimer. Part of the ribosomal stalk of the 50S ribosomal subunit. Forms a multimeric L10(L12)X complex, where L10 forms an elongated spine to which 2 to 4 L12 dimers bind in a sequential fashion. Binds GTP-bound translation factors.

In terms of biological role, forms part of the ribosomal stalk which helps the ribosome interact with GTP-bound translation factors. Is thus essential for accurate translation. This is Large ribosomal subunit protein bL12 from Prochlorococcus marinus subsp. pastoris (strain CCMP1986 / NIES-2087 / MED4).